The chain runs to 503 residues: Probable cytosol aminopeptidase (503 aa).

Lysine 274 and aspartate 279 together coordinate Mn(2+). Lysine 286 is a catalytic residue. Positions 297, 356, and 358 each coordinate Mn(2+). The active site involves arginine 360.

Belongs to the peptidase M17 family. It depends on Mn(2+) as a cofactor.

The protein resides in the cytoplasm. The enzyme catalyses Release of an N-terminal amino acid, Xaa-|-Yaa-, in which Xaa is preferably Leu, but may be other amino acids including Pro although not Arg or Lys, and Yaa may be Pro. Amino acid amides and methyl esters are also readily hydrolyzed, but rates on arylamides are exceedingly low.. It catalyses the reaction Release of an N-terminal amino acid, preferentially leucine, but not glutamic or aspartic acids.. Its function is as follows. Presumably involved in the processing and regular turnover of intracellular proteins. Catalyzes the removal of unsubstituted N-terminal amino acids from various peptides. This is Probable cytosol aminopeptidase from Burkholderia pseudomallei (strain 1710b).